The primary structure comprises 488 residues: V-type proton ATPase subunit B 1 (488 aa).

The protein belongs to the ATPase alpha/beta chains family. In terms of assembly, V-ATPase is a heteromultimeric enzyme composed of a peripheral catalytic V1 complex (main components: subunits A, B, C, D, E, and F) attached to an integral membrane V0 proton pore complex (main component: the proteolipid protein).

In terms of biological role, non-catalytic subunit of the peripheral V1 complex of vacuolar ATPase. V-ATPase is responsible for acidifying a variety of intracellular compartments in eukaryotic cells. The protein is V-type proton ATPase subunit B 1 of Gossypium hirsutum (Upland cotton).